Reading from the N-terminus, the 1496-residue chain is Chromosome partition protein MukB (1496 aa).

Residue 63-70 (GGNGAGKS) coordinates ATP. Coiled-coil stretches lie at residues 328–493 (KLEL…QRLS), 536–632 (KMQA…APAW), 808–832 (RAAREKHLETLKAERDEVSEQHAER), 861–1171 (NPEE…SAEE), and 1235–1291 (IDAI…LQNI). The interval 694–811 (PDGSDDVRLN…EVPLFGRAAR (118 aa)) is flexible hinge. Over residues 1082-1091 (RARSRRDELQ) the composition is skewed to basic and acidic residues. The disordered stretch occupies residues 1082 to 1101 (RARSRRDELQQRLSQQRSRK).

Belongs to the SMC family. MukB subfamily. Homodimerization via its hinge domain. Binds to DNA via its C-terminal region. Interacts, and probably forms a ternary complex, with MukE and MukF via its C-terminal region. The complex formation is stimulated by calcium or magnesium. Interacts with tubulin-related protein FtsZ.

It is found in the cytoplasm. The protein localises to the nucleoid. Its function is as follows. Plays a central role in chromosome condensation, segregation and cell cycle progression. Functions as a homodimer, which is essential for chromosome partition. Involved in negative DNA supercoiling in vivo, and by this means organize and compact chromosomes. May achieve or facilitate chromosome segregation by condensation DNA from both sides of a centrally located replisome during cell division. In Actinobacillus pleuropneumoniae serotype 5b (strain L20), this protein is Chromosome partition protein MukB.